A 332-amino-acid polypeptide reads, in one-letter code: MCSQELWLENERKCAMVRKSKPSRKRQELLAIAFGVKVGLKGGFLWSPLKLFACSQISSLVRRAALTHNDNHFNYEKTHNFKVHTFRGPHWCEYCANFMWGLIAQGVRCSDCGLNVHKQCSKHVPNDCQPDLKRIKKVYCCDLTTLVKAHNTQRPMVVDICIREIEARGLKSEGLYRVSGFTEHIEDVKMAFDRDGEKADISANIYPDINIITGALKLYFRDLPIPIITYDTYSKFIEAAKISNADERLEAVHEVLMLLPPAHYETLRYLMIHLKKVTMNEKDNLMNAENLGIVFGPTLMRPPEDSTLTTLHDMRYQKLIVQILIENEDVLF.

The Phorbol-ester/DAG-type zinc finger occupies Thr78–Cys128. A Rho-GAP domain is found at Cys141–Phe332.

The protein resides in the membrane. With respect to regulation, in the inactive state, the N terminus protrudes into the active site of the Rho-GAP domain, sterically blocking Rac binding. Phospholipid binding to the Phorbol-ester/DAG-type zinc-finger/C1 domain triggers the cooperative dissociation of these interactions, allowing the N-terminus to move out of the active site and thereby activating the enzyme. GTPase-activating protein for p21-rac. The protein is Beta-chimaerin (Chn2) of Mus musculus (Mouse).